A 462-amino-acid polypeptide reads, in one-letter code: Amino-acid permease AapA (462 aa).

The next 12 membrane-spanning stretches (helical) occupy residues 27-47 (LMAI…KSIH), 48-68 (FAGP…FFIM), 96-116 (AAFI…MADL), 134-154 (LPGL…VKLF), 160-180 (WFAL…ILLI), 209-229 (GFIL…LVGL), 252-272 (ILLF…WNVL), 279-299 (FVQV…NFVV), 343-363 (ALFF…LMPE), 366-386 (FTLI…ITVI), 410-430 (PLSN…LALA), and 435-455 (IALF…KVQT).

The protein belongs to the amino acid-polyamine-organocation (APC) superfamily.

The protein resides in the cell membrane. Its function is as follows. Probable amino-acid or metabolite transport protein. This chain is Amino-acid permease AapA (aapA), found in Bacillus subtilis (strain 168).